A 465-amino-acid polypeptide reads, in one-letter code: UDP-N-acetylmuramoylalanine--D-glutamate ligase (465 aa).

127-133 (GSNGKST) is an ATP binding site.

It belongs to the MurCDEF family.

The protein resides in the cytoplasm. It carries out the reaction UDP-N-acetyl-alpha-D-muramoyl-L-alanine + D-glutamate + ATP = UDP-N-acetyl-alpha-D-muramoyl-L-alanyl-D-glutamate + ADP + phosphate + H(+). It participates in cell wall biogenesis; peptidoglycan biosynthesis. Its function is as follows. Cell wall formation. Catalyzes the addition of glutamate to the nucleotide precursor UDP-N-acetylmuramoyl-L-alanine (UMA). The chain is UDP-N-acetylmuramoylalanine--D-glutamate ligase from Cereibacter sphaeroides (strain ATCC 17023 / DSM 158 / JCM 6121 / CCUG 31486 / LMG 2827 / NBRC 12203 / NCIMB 8253 / ATH 2.4.1.) (Rhodobacter sphaeroides).